Consider the following 306-residue polypeptide: Palmitoyl-protein thioesterase 1 (306 aa).

Positions 1 to 27 (MASSCSRRLLAAALLPWCCAAWALGHL) are cleaved as a signal peptide. 3 disulfides stabilise this stretch: Cys45-Cys46, Cys96-Cys128, and Cys152-Cys160. Ser115 is an active-site residue. Asn197, Asn212, and Asn232 each carry an N-linked (GlcNAc...) asparagine glycan. Catalysis depends on residues Asp233 and His289.

Belongs to the palmitoyl-protein thioesterase family. Interacts with CLN5, ATP5F1A and ATP5F1B. In terms of processing, glycosylated. Highest level in testis and kidney, lower in heart, brain and lung and lowest in skeletal muscle.

It is found in the lysosome. It localises to the secreted. The protein resides in the golgi apparatus. The protein localises to the endoplasmic reticulum. It catalyses the reaction S-hexadecanoyl-L-cysteinyl-[protein] + H2O = L-cysteinyl-[protein] + hexadecanoate + H(+). The enzyme catalyses hexadecanoyl-CoA + H2O = hexadecanoate + CoA + H(+). The catalysed reaction is S-hexadecanoyl-N-acetylcysteamine + H2O = N-acetylcysteamine + hexadecanoate + H(+). It carries out the reaction S-hexadecanoyl-N-acetylcysteine methyl ester + H2O = N-acetylcysteine methyl ester + hexadecanoate + H(+). Functionally, has thioesterase activity against fatty acid thioesters with 14 -18 carbons, including palmitoyl-CoA, S-palmitoyl-N-acetylcysteamine, and palmitoylated proteins. In contrast to PPT2, PPT1 can hydrolyze palmitoylated proteins and palmitoylcysteine. The protein is Palmitoyl-protein thioesterase 1 (Ppt1) of Mus musculus (Mouse).